The primary structure comprises 289 residues: Ketose 3-epimerase (289 aa).

Residue E146 is the Proton donor/acceptor of the active site. E146 lines the Mn(2+) pocket. Substrate contacts are provided by residues E152 and 179–182 (DTYH). 2 residues coordinate Mn(2+): D179 and H205. R211 contacts substrate. E240 (proton donor/acceptor) is an active-site residue. E240 contacts Mn(2+).

This sequence belongs to the hyi family. Homotetramer. Mg(2+) is required as a cofactor. It depends on Mn(2+) as a cofactor. Requires Co(2+) as cofactor.

The enzyme catalyses L-ribulose = L-xylulose. It carries out the reaction D-allulose = keto-D-fructose. The catalysed reaction is keto-L-tagatose = keto-L-sorbose. It catalyses the reaction D-ribulose = D-xylulose. The enzyme catalyses L-allulose = keto-L-fructose. It carries out the reaction keto-D-tagatose = keto-D-sorbose. Functionally, catalyzes the reversible C-3 epimerization of several ketoses. Shows the highest enzymatic activity for the epimerization of L-ribulose to L-xylulose. Is also able to convert D-allulose (also known as D-psicose) to D-fructose and, to a lesser extent, L-tagatose to L-sorbose, D-ribulose to D-xylulose, L-allulose to L-fructose and D-tagatose to D-sorbose. The sequence is that of Ketose 3-epimerase from Arthrobacter globiformis.